The chain runs to 445 residues: Dolichyl-diphosphooligosaccharide--protein glycosyltransferase 48 kDa subunit (445 aa).

A signal peptide spans 1–32 (MRRRRKMEAGAAARAWSLLWLLLPLLGPVCAS). The Lumenal portion of the chain corresponds to 33–415 (GPRTLVLLDN…QYERFIPSAY (383 aa)). A helical membrane pass occupies residues 416–436 (PYYASAFSMMLGLFIFSTVFL). Residues 437-445 (HMKEKEKSD) are Cytoplasmic-facing.

It belongs to the DDOST 48 kDa subunit family. As to quaternary structure, component of the oligosaccharyltransferase (OST) complex. OST exists in two different complex forms which contain common core subunits RPN1, RPN2, OST48, OST4, DAD1 and TMEM258, either STT3A or STT3B as catalytic subunits, and form-specific accessory subunits. STT3A complex assembly occurs through the formation of 3 subcomplexes. Subcomplex 1 contains RPN1 and TMEM258, subcomplex 2 contains the STT3A-specific subunits STT3A, DC2/OSTC, and KCP2 as well as the core subunit OST4, and subcomplex 3 contains RPN2, DAD1, and OST48. The STT3A complex can form stable complexes with the Sec61 complex or with both the Sec61 and TRAP complexes. Interacts with SMIM22.

Its subcellular location is the endoplasmic reticulum. It is found in the endoplasmic reticulum membrane. Its pathway is protein modification; protein glycosylation. Subunit of the oligosaccharyl transferase (OST) complex that catalyzes the initial transfer of a defined glycan (Glc(3)Man(9)GlcNAc(2) in eukaryotes) from the lipid carrier dolichol-pyrophosphate to an asparagine residue within an Asn-X-Ser/Thr consensus motif in nascent polypeptide chains, the first step in protein N-glycosylation. N-glycosylation occurs cotranslationally and the complex associates with the Sec61 complex at the channel-forming translocon complex that mediates protein translocation across the endoplasmic reticulum (ER). All subunits are required for a maximal enzyme activity. Required for the assembly of both SST3A- and SS3B-containing OST complexes. The chain is Dolichyl-diphosphooligosaccharide--protein glycosyltransferase 48 kDa subunit from Canis lupus familiaris (Dog).